We begin with the raw amino-acid sequence, 26 residues long: uncharacterized protein (26 aa).

Post-translationally, phosphorylated by YfhK.

Probable member of a two-component regulatory system YfhA/YfhK. This is an uncharacterized protein from Klebsiella oxytoca.